The following is a 265-amino-acid chain: Probable trehalose-phosphate phosphatase (265 aa).

Aspartate 35 (nucleophile) is an active-site residue. Mg(2+)-binding residues include aspartate 35, aspartate 37, and aspartate 213. Substrate is bound at residue 35–37; the sequence is DID.

Belongs to the trehalose phosphatase family. Mg(2+) is required as a cofactor.

The enzyme catalyses alpha,alpha-trehalose 6-phosphate + H2O = alpha,alpha-trehalose + phosphate. The protein operates within glycan biosynthesis; trehalose biosynthesis. In terms of biological role, removes the phosphate from trehalose 6-phosphate to produce free trehalose. The protein is Probable trehalose-phosphate phosphatase (otsB) of Sinorhizobium fredii (strain NBRC 101917 / NGR234).